The primary structure comprises 62 residues: Large ribosomal subunit protein uL30 (62 aa).

It belongs to the universal ribosomal protein uL30 family. As to quaternary structure, part of the 50S ribosomal subunit.

This chain is Large ribosomal subunit protein uL30, found in Alkalilimnicola ehrlichii (strain ATCC BAA-1101 / DSM 17681 / MLHE-1).